The chain runs to 329 residues: Biotin synthase (329 aa).

In terms of domain architecture, Radical SAM core spans 38-262 (NTIQVSTLLS…IMPHSYIRLS (225 aa)). [4Fe-4S] cluster-binding residues include C53, C57, and C60. [2Fe-2S] cluster contacts are provided by C97, C128, C188, and R260.

Belongs to the radical SAM superfamily. Biotin synthase family. Homodimer. It depends on [4Fe-4S] cluster as a cofactor. The cofactor is [2Fe-2S] cluster.

It catalyses the reaction (4R,5S)-dethiobiotin + (sulfur carrier)-SH + 2 reduced [2Fe-2S]-[ferredoxin] + 2 S-adenosyl-L-methionine = (sulfur carrier)-H + biotin + 2 5'-deoxyadenosine + 2 L-methionine + 2 oxidized [2Fe-2S]-[ferredoxin]. It functions in the pathway cofactor biosynthesis; biotin biosynthesis; biotin from 7,8-diaminononanoate: step 2/2. Catalyzes the conversion of dethiobiotin (DTB) to biotin by the insertion of a sulfur atom into dethiobiotin via a radical-based mechanism. This is Biotin synthase from Acinetobacter baumannii (strain SDF).